A 209-amino-acid polypeptide reads, in one-letter code: ATP-dependent Clp protease proteolytic subunit (209 aa).

Serine 103 acts as the Nucleophile in catalysis. Residue histidine 128 is part of the active site.

The protein belongs to the peptidase S14 family. In terms of assembly, fourteen ClpP subunits assemble into 2 heptameric rings which stack back to back to give a disk-like structure with a central cavity, resembling the structure of eukaryotic proteasomes.

It is found in the cytoplasm. The catalysed reaction is Hydrolysis of proteins to small peptides in the presence of ATP and magnesium. alpha-casein is the usual test substrate. In the absence of ATP, only oligopeptides shorter than five residues are hydrolyzed (such as succinyl-Leu-Tyr-|-NHMec, and Leu-Tyr-Leu-|-Tyr-Trp, in which cleavage of the -Tyr-|-Leu- and -Tyr-|-Trp bonds also occurs).. Cleaves peptides in various proteins in a process that requires ATP hydrolysis. Has a chymotrypsin-like activity. Plays a major role in the degradation of misfolded proteins. This is ATP-dependent Clp protease proteolytic subunit from Lawsonia intracellularis (strain PHE/MN1-00).